Here is a 540-residue protein sequence, read N- to C-terminus: Glucose-6-phosphate isomerase (540 aa).

Glutamate 346 acts as the Proton donor in catalysis. Active-site residues include histidine 377 and lysine 505.

This sequence belongs to the GPI family.

It is found in the cytoplasm. The enzyme catalyses alpha-D-glucose 6-phosphate = beta-D-fructose 6-phosphate. The protein operates within carbohydrate biosynthesis; gluconeogenesis. It participates in carbohydrate degradation; glycolysis; D-glyceraldehyde 3-phosphate and glycerone phosphate from D-glucose: step 2/4. In terms of biological role, catalyzes the reversible isomerization of glucose-6-phosphate to fructose-6-phosphate. The polypeptide is Glucose-6-phosphate isomerase (Francisella philomiragia subsp. philomiragia (strain ATCC 25017 / CCUG 19701 / FSC 153 / O#319-036)).